We begin with the raw amino-acid sequence, 285 residues long: Elongation factor Ts (285 aa).

The segment at 82–85 (TDFV) is involved in Mg(2+) ion dislocation from EF-Tu.

It belongs to the EF-Ts family.

Its subcellular location is the cytoplasm. Associates with the EF-Tu.GDP complex and induces the exchange of GDP to GTP. It remains bound to the aminoacyl-tRNA.EF-Tu.GTP complex up to the GTP hydrolysis stage on the ribosome. The chain is Elongation factor Ts from Sodalis glossinidius (strain morsitans).